The following is a 514-amino-acid chain: MPPLRRQALTLAEKKAIRKHYFESATKPSQQELISWFEEHFHKKLAQSTVSSILSSKNEFLDNLDAENSQIRRNRQGKYPILENALIDWQTRLQKQDGAITGNAIKKSAAELWRRIPEYSELPIPEFSNGWLEKFKKRCLKHGLKLQGESTSVNQGTYEENMVQIQELISLFDPKDIFNMDETGLCWKLIPNQSPASERVKGITRDKARVTVTICCNATGSEKAPLWVIGYAKSPRAFRQANAHPDSMDFHWRYNGTARMTTSIMEEWLRWFDDLMKGRKVLLILDKFVAHECALENIRNSERKLVNTTVVFLPVNSTEIYHPCGQEIVYAFKSYYRKYWLNYMLEEIRLGKNPSKTMNVLKAVRWMIRSWNVDFEPSIIYNCFLRSGLFQNQQPLTGPSPETIRIAVNLQELIGKYLGDKDIFQIENFINPIEENSADTNDDIVNQVAAQFLDEREFETDEEEEESQYLLSTKDAINAINTLLNFQEQSEDGNVLFTRTLLQFQKVLESRSIV.

One can recognise an HTH CENPB-type domain in the interval 70–145; it reads QIRRNRQGKY…KKRCLKHGLK (76 aa). Residues 172-384 form the DDE-1 domain; it reads FDPKDIFNMD…FEPSIIYNCF (213 aa).

It is found in the nucleus. The protein localises to the chromosome. The protein resides in the centromere. In terms of biological role, binds to the central core and core-associated repeat regions of centromeric heterochromatin. This is CENP-B homolog protein 2 (cbh2) from Schizosaccharomyces pombe (strain 972 / ATCC 24843) (Fission yeast).